We begin with the raw amino-acid sequence, 99 residues long: Large ribosomal subunit protein eL21 (99 aa).

The protein belongs to the eukaryotic ribosomal protein eL21 family.

The sequence is that of Large ribosomal subunit protein eL21 from Staphylothermus marinus (strain ATCC 43588 / DSM 3639 / JCM 9404 / F1).